The sequence spans 116 residues: Nucleoid-associated protein P9301_00191 (116 aa).

Belongs to the YbaB/EbfC family. As to quaternary structure, homodimer.

It is found in the cytoplasm. Its subcellular location is the nucleoid. Binds to DNA and alters its conformation. May be involved in regulation of gene expression, nucleoid organization and DNA protection. In Prochlorococcus marinus (strain MIT 9301), this protein is Nucleoid-associated protein P9301_00191.